The following is a 189-amino-acid chain: Peptidyl-tRNA hydrolase (189 aa).

Y14 contributes to the tRNA binding site. Residue H19 is the Proton acceptor of the active site. Residues Y64, N66, and N112 each contribute to the tRNA site.

The protein belongs to the PTH family. As to quaternary structure, monomer.

Its subcellular location is the cytoplasm. It catalyses the reaction an N-acyl-L-alpha-aminoacyl-tRNA + H2O = an N-acyl-L-amino acid + a tRNA + H(+). In terms of biological role, hydrolyzes ribosome-free peptidyl-tRNAs (with 1 or more amino acids incorporated), which drop off the ribosome during protein synthesis, or as a result of ribosome stalling. Functionally, catalyzes the release of premature peptidyl moieties from peptidyl-tRNA molecules trapped in stalled 50S ribosomal subunits, and thus maintains levels of free tRNAs and 50S ribosomes. In Brevibacillus brevis (strain 47 / JCM 6285 / NBRC 100599), this protein is Peptidyl-tRNA hydrolase.